The chain runs to 382 residues: Ustilagic acid biosynthesis cluster protein orf2 (382 aa).

The segment covering 1–20 (MLQEAKVSTHTSNPLSQSVP) has biased composition (polar residues). Residues 1–22 (MLQEAKVSTHTSNPLSQSVPQY) are disordered.

Its pathway is secondary metabolite biosynthesis. In terms of biological role, part of the gene cluster that mediates the biosynthesis of the glycolipid biosurfactant ustilagic acid (UA). UA is a secreted cellobiose glycolipid that is toxic for many microorganisms and confers biocontrol activity to U.maydis. UA consists of 15,16-dihydroxypalmitic or 2,15,16-trihydroxypalmitic acid, which is O-glycosidically linked to cellobiose at its terminal hydroxyl group. In addition, the cellobiose moiety is acetylated and acylated with a short-chain hydroxy fatty acid. UA biosynthesis starts with omega-hydroxylation of palmitic acid catalyzed by the cytochrome P450 monooxygenase cyp1. Terminal hydroxylation of palmitic acid precedes subterminal hydroxylation catalyzed by the cytochrome P450 monooxygenase cyp2. Sequential glucosylation of the hydroxy fatty acid is probably catalyzed by the glycosyltransferase ugt1. The cellobiose lipid is further decorated by acetylation of the proximal glucose residue and by acylation with a short-chain beta-hydroxy fatty acid at the distal glucose residue. The acyltransferase uat1 may be a good candidate for catalyzing either acetylation or acylation of the cellobiose lipid. The fatty acid synthase fas2 may be involved in synthesis of the carbon backbone of the short-chain beta-hydroxy fatty acid esterified to the cellobiose disaccharide. The secreted UA consists of a mixture of both alpha-hydroxylated and non-hydroxylated glycolipids; therefore, alpha-hydroxylation of the long-chain fatty, catalyzed by the fatty acid hydroxylase ahd1, occurs late in UA biosynthesis and may be the last step before secretion. The polypeptide is Ustilagic acid biosynthesis cluster protein orf2 (Mycosarcoma maydis (Corn smut fungus)).